The sequence spans 599 residues: Putative fused cobalt transport protein CbiMQ (599 aa).

The cbiM stretch occupies residues 1 to 239 (MHIMEGFLPS…LLPSSDQNLS (239 aa)). 16 helical membrane passes run 12–32 (WWQF…AALI), 44–64 (LLGL…PSVG), 74–94 (FGAI…VLVF), 106–126 (TLGA…CIIF), 140–160 (SFSV…YMMT), 162–182 (LQLA…FVVY), 183–203 (LGIF…LIVL), 247–267 (IIAG…LAGL), 303–323 (WLFA…LYLL), 356–376 (QVSA…GVTS), 377–397 (PLPY…LIIA), 407–427 (LLTI…LITG), 438–458 (IGAF…LVLS), 463–483 (GMCS…FSVL), 493–513 (IDLS…AIAI), and 579–599 (MAVF…MLLL). A cbiQ region spans residues 341-599 (DEHILDDVAI…GLLCAEMLLL (259 aa)).

The protein in the N-terminal section; belongs to the CbiM family. It in the C-terminal section; belongs to the CbiQ family. Forms an energy-coupling factor (ECF) transporter complex composed of an ATP-binding protein (A component, CbiO), a transmembrane protein (T component, CbiQ) and 2 possible substrate-capture proteins (S components, CbiM and CbiN) of unknown stoichimetry.

It is found in the cell membrane. It participates in cofactor biosynthesis; adenosylcobalamin biosynthesis. Functionally, part of the energy-coupling factor (ECF) transporter complex CbiMNOQ involved in cobalt import. The polypeptide is Putative fused cobalt transport protein CbiMQ (cbiMQ) (Methanocorpusculum labreanum (strain ATCC 43576 / DSM 4855 / Z)).